The following is a 600-amino-acid chain: Long-chain-fatty-acid--CoA ligase FadD15 (600 aa).

This sequence belongs to the ATP-dependent AMP-binding enzyme family.

It catalyses the reaction a long-chain fatty acid + ATP + CoA = a long-chain fatty acyl-CoA + AMP + diphosphate. The catalysed reaction is dodecanoate + ATP + CoA = dodecanoyl-CoA + AMP + diphosphate. The enzyme catalyses hexadecanoate + ATP + CoA = hexadecanoyl-CoA + AMP + diphosphate. The protein operates within lipid metabolism; fatty acid biosynthesis. In terms of biological role, catalyzes the activation of long-chain fatty acids as acyl-coenzyme A (acyl-CoA), which are then transferred to the multifunctional polyketide synthase (PKS) type III for further chain extension. The chain is Long-chain-fatty-acid--CoA ligase FadD15 (fadD15) from Mycobacterium tuberculosis (strain ATCC 25618 / H37Rv).